A 328-amino-acid polypeptide reads, in one-letter code: Carbonic anhydrase-related protein 11 (328 aa).

Positions 1 to 23 are cleaved as a signal peptide; the sequence is MGAAPRLSAPRVLVLWAALGAAA. The 271-residue stretch at 33–303 folds into the Alpha-carbonic anhydrase domain; that stretch reads DWWSYKDNLQ…LAHRALRGNR (271 aa). The N-linked (GlcNAc...) asparagine glycan is linked to Asn-118. Residues 300–328 form a disordered region; the sequence is RGNRDPRHPERRCRGPNYRLHVDDVPHGL. Positions 319-328 are enriched in basic and acidic residues; that stretch reads LHVDDVPHGL.

The protein belongs to the alpha-carbonic anhydrase family.

It is found in the secreted. Does not have a catalytic activity. This chain is Carbonic anhydrase-related protein 11 (CA11), found in Ovis aries (Sheep).